The sequence spans 443 residues: Chromosomal replication initiator protein DnaA (443 aa).

The tract at residues 1–80 (MFLEEKLNLV…ETCGDKIPVE (80 aa)) is domain I, interacts with DnaA modulators. The domain II stretch occupies residues 80 to 104 (EILIETKAASPLQSILEKSFDQKDF). The domain III, AAA+ region stretch occupies residues 105–321 (QFNPDYTFET…GALNDIYLYK (217 aa)). ATP-binding residues include G148, G150, K151, and T152. The domain IV, binds dsDNA stretch occupies residues 322-443 (KSYSLLFLNL…ERISSKYKLQ (122 aa)).

This sequence belongs to the DnaA family. In terms of assembly, oligomerizes as a right-handed, spiral filament on DNA at oriC.

Its subcellular location is the cytoplasm. Its function is as follows. Plays an essential role in the initiation and regulation of chromosomal replication. ATP-DnaA binds to the origin of replication (oriC) to initiate formation of the DNA replication initiation complex once per cell cycle. Binds the DnaA box (a 9 base pair repeat at the origin) and separates the double-stranded (ds)DNA. Forms a right-handed helical filament on oriC DNA; dsDNA binds to the exterior of the filament while single-stranded (ss)DNA is stabiized in the filament's interior. The ATP-DnaA-oriC complex binds and stabilizes one strand of the AT-rich DNA unwinding element (DUE), permitting loading of DNA polymerase. After initiation quickly degrades to an ADP-DnaA complex that is not apt for DNA replication. Binds acidic phospholipids. The polypeptide is Chromosomal replication initiator protein DnaA (Leptospira interrogans serogroup Icterohaemorrhagiae serovar copenhageni (strain Fiocruz L1-130)).